A 578-amino-acid polypeptide reads, in one-letter code: ER degradation-enhancing alpha-mannosidase-like protein 2 (578 aa).

An N-terminal signal peptide occupies residues 1-21 (MPFRLLIPLGLLCALLPQHHG). Asn90, Asn112, Asn289, and Asn450 each carry an N-linked (GlcNAc...) asparagine glycan. The disordered stretch occupies residues 517-557 (KNTVSSGPWEPPARPGTLFSPENHDQARERKPAKQKVPLLS). Over residues 538–548 (ENHDQARERKP) the composition is skewed to basic and acidic residues.

The protein belongs to the glycosyl hydrolase 47 family. Post-translationally, N-glycosylated. Expressed ubiquitously in all tissues tested with slightly higher levels detected in small intestine and peripheral blood leukocytes and weakest levels in brain and skeletal muscle.

It is found in the endoplasmic reticulum lumen. Involved in the endoplasmic reticulum-associated degradation (ERAD) pathway that targets misfolded glycoproteins for degradation in an N-glycan-dependent manner. May initiate ERAD by promoting the first mannose trimming step of ERAD substrates, from Man9GlcNAc2 to Man8GlcNAc2. Seems to recognize and bind to exposed hydrophobic regions in target proteins. The polypeptide is ER degradation-enhancing alpha-mannosidase-like protein 2 (EDEM2) (Homo sapiens (Human)).